The primary structure comprises 319 residues: Type II methyltransferase M.MpnI (319 aa).

The protein belongs to the N(4)/N(6)-methyltransferase family.

It catalyses the reaction a 2'-deoxyadenosine in DNA + S-adenosyl-L-methionine = an N(6)-methyl-2'-deoxyadenosine in DNA + S-adenosyl-L-homocysteine + H(+). Its function is as follows. A methylase that recognizes the double-stranded sequence 5'-CTAT-3' and methylates A-3 on one strand; probably responsible for all of the methylation on this site in the genome. The polypeptide is Type II methyltransferase M.MpnI (Mycoplasma pneumoniae (strain ATCC 29342 / M129 / Subtype 1) (Mycoplasmoides pneumoniae)).